Here is a 418-residue protein sequence, read N- to C-terminus: PP2A regulatory subunit TAP46 (418 aa).

A disordered region spans residues 367–418; it reads KMIQESNSAWHKDGSRSAQEDEDAEEEKARAWDDWKDDNPRGAGNKKLTPCG. Composition is skewed to basic and acidic residues over residues 376-385 and 393-406; these read WHKDGSRSAQ and EKAR…DDNP.

This sequence belongs to the IGBP1/TAP42 family.

In terms of biological role, involved in the regulation of the TOR signaling pathway. Seems to act as a regulator of PP2A catalytic activity. This Oryza sativa subsp. japonica (Rice) protein is PP2A regulatory subunit TAP46.